A 292-amino-acid polypeptide reads, in one-letter code: UTP--glucose-1-phosphate uridylyltransferase (292 aa).

The protein belongs to the UDPGP type 2 family.

It catalyses the reaction alpha-D-glucose 1-phosphate + UTP + H(+) = UDP-alpha-D-glucose + diphosphate. Functionally, may play a role in stationary phase survival. The sequence is that of UTP--glucose-1-phosphate uridylyltransferase (galU) from Mycoplasma genitalium (strain ATCC 33530 / DSM 19775 / NCTC 10195 / G37) (Mycoplasmoides genitalium).